The primary structure comprises 416 residues: Nuclear hormone receptor family member nhr-67 (416 aa).

Positions 18-98 (DVDCRVCEDH…IGMNKDAVQH (81 aa)) form a DNA-binding region, nuclear receptor. NR C4-type zinc fingers lie at residues 21–41 (CRVC…CDGC) and 57–86 (CKNK…LRKC). The interval 331–398 (KTETEEGEDI…SSRPRHSIRS (68 aa)) is disordered. Over residues 335–346 (EEGEDIEEEDDA) the composition is skewed to acidic residues. Positions 377–390 (SSTQPSSASSPSSS) are enriched in low complexity.

This sequence belongs to the nuclear hormone receptor family. As to expression, expressed in linker cell.

The protein resides in the nucleus. Functionally, orphan nuclear receptor that binds DNA containing an extended core motif half-site sequence 5'-AAGTCA-3'. In males, plays an essential role in the migration of the linker cell which guides gonad elongation during the L3 and L4 stages of larval development by negatively regulating the expression of netrin receptor unc-5 at the mid-L3 stage. Involved in the regulation of non-apoptotic cell death in the linker cell, acting upstream of or in parallel to transcription factor hsf-1. Represses hypoxia response genes, fmo-2 and acs-2, in both normoxic and hypoxic conditions, probably acting via repression of nuclear receptor nhr-49. This chain is Nuclear hormone receptor family member nhr-67 (nhr-67), found in Caenorhabditis elegans.